We begin with the raw amino-acid sequence, 186 residues long: Peptidyl-tRNA hydrolase (186 aa).

A tRNA-binding site is contributed by Tyr-14. His-19 functions as the Proton acceptor in the catalytic mechanism. Tyr-60 and Asn-62 together coordinate tRNA.

The protein belongs to the PTH family. Monomer.

It localises to the cytoplasm. It carries out the reaction an N-acyl-L-alpha-aminoacyl-tRNA + H2O = an N-acyl-L-amino acid + a tRNA + H(+). Its function is as follows. Hydrolyzes ribosome-free peptidyl-tRNAs (with 1 or more amino acids incorporated), which drop off the ribosome during protein synthesis, or as a result of ribosome stalling. In terms of biological role, catalyzes the release of premature peptidyl moieties from peptidyl-tRNA molecules trapped in stalled 50S ribosomal subunits, and thus maintains levels of free tRNAs and 50S ribosomes. The polypeptide is Peptidyl-tRNA hydrolase (Mycoplasmopsis pulmonis (strain UAB CTIP) (Mycoplasma pulmonis)).